The chain runs to 93 residues: Acylphosphatase (93 aa).

The Acylphosphatase-like domain maps to 5–93; it reads TAILRVTGFV…EDRKTFDIVY (89 aa). Catalysis depends on residues Arg-20 and Asn-38.

This sequence belongs to the acylphosphatase family.

The enzyme catalyses an acyl phosphate + H2O = a carboxylate + phosphate + H(+). The protein is Acylphosphatase (acyP) of Listeria welshimeri serovar 6b (strain ATCC 35897 / DSM 20650 / CCUG 15529 / CIP 8149 / NCTC 11857 / SLCC 5334 / V8).